We begin with the raw amino-acid sequence, 135 residues long: Protein PsiE homolog (135 aa).

The next 4 membrane-spanning stretches (helical) occupy residues 13-33 (VLQW…VIFL), 54-74 (YMLV…ALIV), 82-102 (HFPL…LIIV), and 107-127 (PNDT…LYLA).

This sequence belongs to the PsiE family.

It is found in the cell inner membrane. This Edwardsiella ictaluri (strain 93-146) protein is Protein PsiE homolog.